The sequence spans 43 residues: Photosystem II reaction center protein Psb30 (43 aa).

Residues 15–35 (VIFQLTFVSLILISGPVVIFL) traverse the membrane as a helical segment.

It belongs to the Psb30/Ycf12 family. As to quaternary structure, PSII is composed of 1 copy each of membrane proteins PsbA, PsbB, PsbC, PsbD, PsbE, PsbF, PsbH, PsbI, PsbJ, PsbK, PsbL, PsbM, PsbT, PsbX, PsbY, PsbZ, Psb30/Ycf12, peripheral proteins PsbO, CyanoQ (PsbQ), PsbU, PsbV and a large number of cofactors. It forms dimeric complexes.

The protein localises to the cellular thylakoid membrane. Functionally, a core subunit of photosystem II (PSII), probably helps stabilize the reaction center. In Picosynechococcus sp. (strain ATCC 27264 / PCC 7002 / PR-6) (Agmenellum quadruplicatum), this protein is Photosystem II reaction center protein Psb30.